Reading from the N-terminus, the 351-residue chain is V-type proton ATPase subunit d2 (351 aa).

The protein belongs to the V-ATPase V0D/AC39 subunit family. V-ATPase is a heteromultimeric enzyme composed of a peripheral catalytic V1 complex (components A to H) attached to an integral membrane V0 proton pore complex (components: a, c, c'', d and e).

It is found in the vacuole membrane. Its function is as follows. Subunit of the integral membrane V0 complex of vacuolar ATPase. Vacuolar ATPase is responsible for acidifying a variety of intracellular compartments in eukaryotic cells, thus providing most of the energy required for transport processes in the vacuolar system. The polypeptide is V-type proton ATPase subunit d2 (VHA-d2) (Arabidopsis thaliana (Mouse-ear cress)).